Here is an 827-residue protein sequence, read N- to C-terminus: Valine--tRNA ligase (827 aa).

Positions Pro41–His51 match the 'HIGH' region motif. The 'KMSKS' region motif lies at Lys511–Ser515. Position 514 (Lys514) interacts with ATP. Residues Glu765–Glu827 adopt a coiled-coil conformation.

The protein belongs to the class-I aminoacyl-tRNA synthetase family. ValS type 1 subfamily. Monomer.

Its subcellular location is the cytoplasm. It catalyses the reaction tRNA(Val) + L-valine + ATP = L-valyl-tRNA(Val) + AMP + diphosphate. Its function is as follows. Catalyzes the attachment of valine to tRNA(Val). As ValRS can inadvertently accommodate and process structurally similar amino acids such as threonine, to avoid such errors, it has a 'posttransfer' editing activity that hydrolyzes mischarged Thr-tRNA(Val) in a tRNA-dependent manner. This is Valine--tRNA ligase from Mycoplasmopsis pulmonis (strain UAB CTIP) (Mycoplasma pulmonis).